The following is a 272-amino-acid chain: Octanoyltransferase (272 aa).

The span at 1–12 (MQQDPPTSQPHT) shows a compositional bias: polar residues. The interval 1–20 (MQQDPPTSQPHTPQIVDGVK) is disordered. Residues 65–255 (HQRPNTVIYV…EMMSFQPYEM (191 aa)) form the BPL/LPL catalytic domain. Residues 103-110 (RGGEITWH), 175-177 (AIG), and 188-190 (GFA) each bind substrate. Catalysis depends on C206, which acts as the Acyl-thioester intermediate.

This sequence belongs to the LipB family.

The protein resides in the cytoplasm. It catalyses the reaction octanoyl-[ACP] + L-lysyl-[protein] = N(6)-octanoyl-L-lysyl-[protein] + holo-[ACP] + H(+). The protein operates within protein modification; protein lipoylation via endogenous pathway; protein N(6)-(lipoyl)lysine from octanoyl-[acyl-carrier-protein]: step 1/2. Functionally, catalyzes the transfer of endogenously produced octanoic acid from octanoyl-acyl-carrier-protein onto the lipoyl domains of lipoate-dependent enzymes. Lipoyl-ACP can also act as a substrate although octanoyl-ACP is likely to be the physiological substrate. In Cutibacterium acnes (strain DSM 16379 / KPA171202) (Propionibacterium acnes), this protein is Octanoyltransferase.